The following is a 248-amino-acid chain: MTPIFFNQQYPTLVDICARWQLVYDANATFELRFESDTLSLHKRDEPKLDGIVVDFVTGAVAHRRKFGGGRGQSIAKAVGLKQGVMPSVVDGTAGLGRDAFVLASLGCTVTMVERHPVVAALLEDGLRRAYQDAEIGDWMRERMRLFHGSSLEALSKLALEVDVVYLDPMYPHRDKSALVKKEMRVFQSLVGADLDADGLLAPALALATKRVVVKRPDYAEDLDGVKPNTVIETKKNRFDVYVKAAMK.

S-adenosyl-L-methionine contacts are provided by residues 98–99, 114–115, 150–151, and Asp-168; these read RD, ER, and SS.

It belongs to the methyltransferase superfamily. RsmJ family.

The protein resides in the cytoplasm. It carries out the reaction guanosine(1516) in 16S rRNA + S-adenosyl-L-methionine = N(2)-methylguanosine(1516) in 16S rRNA + S-adenosyl-L-homocysteine + H(+). Functionally, specifically methylates the guanosine in position 1516 of 16S rRNA. The polypeptide is Ribosomal RNA small subunit methyltransferase J (Shewanella baltica (strain OS223)).